Reading from the N-terminus, the 227-residue chain is Orotidine 5'-phosphate decarboxylase (227 aa).

Residues aspartate 8, lysine 30, aspartate 58–threonine 67, threonine 117, arginine 177, glutamine 186, glycine 206, and arginine 207 each bind substrate. Residue lysine 60 is the Proton donor of the active site.

The protein belongs to the OMP decarboxylase family. Type 1 subfamily. As to quaternary structure, homodimer.

The enzyme catalyses orotidine 5'-phosphate + H(+) = UMP + CO2. It functions in the pathway pyrimidine metabolism; UMP biosynthesis via de novo pathway; UMP from orotate: step 2/2. Functionally, catalyzes the decarboxylation of orotidine 5'-monophosphate (OMP) to uridine 5'-monophosphate (UMP). The sequence is that of Orotidine 5'-phosphate decarboxylase from Campylobacter lari (strain RM2100 / D67 / ATCC BAA-1060).